A 374-amino-acid chain; its full sequence is PqqA peptide cyclase (374 aa).

Positions 13-230 (VPAPIAMLAE…EAEARLRGTL (218 aa)) constitute a Radical SAM core domain. Positions 27, 31, and 34 each coordinate [4Fe-4S] cluster.

Belongs to the radical SAM superfamily. PqqE family. Interacts with PqqD. The interaction is necessary for activity of PqqE. [4Fe-4S] cluster is required as a cofactor.

It carries out the reaction [PQQ precursor protein] + S-adenosyl-L-methionine = E-Y cross-linked-[PQQ precursor protein] + 5'-deoxyadenosine + L-methionine + H(+). It participates in cofactor biosynthesis; pyrroloquinoline quinone biosynthesis. Its function is as follows. Catalyzes the cross-linking of a glutamate residue and a tyrosine residue in the PqqA protein as part of the biosynthesis of pyrroloquinoline quinone (PQQ). The chain is PqqA peptide cyclase from Ruegeria pomeroyi (strain ATCC 700808 / DSM 15171 / DSS-3) (Silicibacter pomeroyi).